Consider the following 108-residue polypeptide: Mitochondrial pyruvate carrier 3 (108 aa).

3 helical membrane passes run 19–35 (IHFW…IANI), 51–67 (IVIT…STVI), and 74–90 (LFSV…YQLT).

The protein belongs to the mitochondrial pyruvate carrier (MPC) (TC 2.A.105) family. In terms of tissue distribution, abundant in leaf and particularly in the guard cells.

Its subcellular location is the mitochondrion. It is found in the mitochondrion inner membrane. Functionally, mediates the uptake of pyruvate into mitochondria. Negatively regulates ABA-induced guard cell signaling and mediates drought stress responses. The polypeptide is Mitochondrial pyruvate carrier 3 (Arabidopsis thaliana (Mouse-ear cress)).